The primary structure comprises 144 residues: Large ribosomal subunit protein uL15 (144 aa).

The tract at residues 1–44 (MKLNELMPSEGSRTNRKRIGRGTSSGTGKTAGRGQKGQKARGKV) is disordered. The span at 23-35 (TSSGTGKTAGRGQ) shows a compositional bias: gly residues.

This sequence belongs to the universal ribosomal protein uL15 family. Part of the 50S ribosomal subunit.

Binds to the 23S rRNA. The protein is Large ribosomal subunit protein uL15 of Pediococcus pentosaceus (strain ATCC 25745 / CCUG 21536 / LMG 10740 / 183-1w).